Consider the following 103-residue polypeptide: Large ribosomal subunit protein bL21 (103 aa).

It belongs to the bacterial ribosomal protein bL21 family. In terms of assembly, part of the 50S ribosomal subunit. Contacts protein L20.

In terms of biological role, this protein binds to 23S rRNA in the presence of protein L20. This Cupriavidus necator (strain ATCC 17699 / DSM 428 / KCTC 22496 / NCIMB 10442 / H16 / Stanier 337) (Ralstonia eutropha) protein is Large ribosomal subunit protein bL21.